We begin with the raw amino-acid sequence, 279 residues long: MGIRKYKPTTPGRRGSSVADFAEITRSTPEKSLLRPLHKTGGRNNSGKITTRHKGGGHKRQYRLIDFRRHDKDGINARVAEIEYDPNRTARIALLHYVDGTKRYIIAPNKLSQGDFVEAGPDADIKPGNNLPLRNIPVGTVIHAVELRPGGGAKMARSAGASVQLVAKEGRFAQLRLPSGEIRNVDVRCRATVGEVGNAEQSNINWGKAGRMRWKGVRPTVRGVAMNPVDHPHGGGEGKTSGGRHPVNPNGKPEGRTRRPNKESDKLIVRRRRTGKNKR.

2 disordered regions span residues 29 to 59 (PEKSLLRPLHKTGGRNNSGKITTRHKGGGHK) and 224 to 279 (VAMN…KNKR). Positions 50 to 59 (TTRHKGGGHK) are enriched in basic residues. The span at 253-268 (PEGRTRRPNKESDKLI) shows a compositional bias: basic and acidic residues. The segment covering 269–279 (VRRRRTGKNKR) has biased composition (basic residues).

Belongs to the universal ribosomal protein uL2 family. In terms of assembly, part of the 50S ribosomal subunit. Forms a bridge to the 30S subunit in the 70S ribosome.

In terms of biological role, one of the primary rRNA binding proteins. Required for association of the 30S and 50S subunits to form the 70S ribosome, for tRNA binding and peptide bond formation. It has been suggested to have peptidyltransferase activity; this is somewhat controversial. Makes several contacts with the 16S rRNA in the 70S ribosome. This is Large ribosomal subunit protein uL2 from Paenarthrobacter aurescens (strain TC1).